Consider the following 74-residue polypeptide: Cytochrome c oxidase assembly factor 5 (74 aa).

In terms of domain architecture, CHCH spans Gln27–Arg65. Positions Cys30 to Cys41 match the Cx10C motif motif. 2 cysteine pairs are disulfide-bonded: Cys30–Cys57 and Cys41–Cys47. Ser37 carries the post-translational modification Phosphoserine. Positions Cys47–Cys57 match the Cx9C motif motif.

This sequence belongs to the PET191 family.

In terms of biological role, involved in an early step of the mitochondrial complex IV assembly process. The polypeptide is Cytochrome c oxidase assembly factor 5 (Coa5) (Mus musculus (Mouse)).